A 38-amino-acid chain; its full sequence is Toxin CSTX-16 (38 aa).

A glutamine amide mark is found at Gln-19 and Gln-38.

It belongs to the cationic peptide 04 (cupiennin) family. 10 (double chain) subfamily. In terms of tissue distribution, expressed by the venom gland.

The protein localises to the secreted. This chain is Toxin CSTX-16, found in Cupiennius salei (American wandering spider).